The sequence spans 397 residues: S-adenosylmethionine synthase (397 aa).

H17 is an ATP binding site. Position 19 (D19) interacts with Mg(2+). E45 contacts K(+). E58 and Q101 together coordinate L-methionine. The interval 101–111 (QSPDIAQGVDK) is flexible loop. ATP contacts are provided by residues 176–178 (DGK), 243–244 (RF), D252, 258–259 (RK), and K279. D252 lines the L-methionine pocket. Residue K283 participates in L-methionine binding.

It belongs to the AdoMet synthase family. In terms of assembly, homotetramer; dimer of dimers. Mg(2+) is required as a cofactor. Requires K(+) as cofactor.

The protein localises to the cytoplasm. The enzyme catalyses L-methionine + ATP + H2O = S-adenosyl-L-methionine + phosphate + diphosphate. It functions in the pathway amino-acid biosynthesis; S-adenosyl-L-methionine biosynthesis; S-adenosyl-L-methionine from L-methionine: step 1/1. Functionally, catalyzes the formation of S-adenosylmethionine (AdoMet) from methionine and ATP. The overall synthetic reaction is composed of two sequential steps, AdoMet formation and the subsequent tripolyphosphate hydrolysis which occurs prior to release of AdoMet from the enzyme. The chain is S-adenosylmethionine synthase from Staphylococcus aureus (strain USA300).